The chain runs to 191 residues: Fe/S biogenesis protein NfuA (191 aa).

Positions 149 and 152 each coordinate [4Fe-4S] cluster.

This sequence belongs to the NfuA family. In terms of assembly, homodimer. It depends on [4Fe-4S] cluster as a cofactor.

Functionally, involved in iron-sulfur cluster biogenesis. Binds a 4Fe-4S cluster, can transfer this cluster to apoproteins, and thereby intervenes in the maturation of Fe/S proteins. Could also act as a scaffold/chaperone for damaged Fe/S proteins. The protein is Fe/S biogenesis protein NfuA of Salmonella typhi.